Here is a 124-residue protein sequence, read N- to C-terminus: MARISGVDLPREKRIEIGLTYVYGIGRVRASKILEEAGVNPDTRVKDLTDEEVAKIAKVIDADPEHLVEGDLRREVAMNIKRLKEIGCYRGIRHRKGLPCRGQKTKTNARTCKGPKKTVANKKK.

The tract at residues 99-124 is disordered; sequence PCRGQKTKTNARTCKGPKKTVANKKK. Over residues 113–124 the composition is skewed to basic residues; sequence KGPKKTVANKKK.

The protein belongs to the universal ribosomal protein uS13 family. Part of the 30S ribosomal subunit. Forms a loose heterodimer with protein S19. Forms two bridges to the 50S subunit in the 70S ribosome.

Its function is as follows. Located at the top of the head of the 30S subunit, it contacts several helices of the 16S rRNA. In the 70S ribosome it contacts the 23S rRNA (bridge B1a) and protein L5 of the 50S subunit (bridge B1b), connecting the 2 subunits; these bridges are implicated in subunit movement. Contacts the tRNAs in the A and P-sites. The protein is Small ribosomal subunit protein uS13 of Lachnospira eligens (strain ATCC 27750 / DSM 3376 / VPI C15-48 / C15-B4) (Eubacterium eligens).